Reading from the N-terminus, the 618-residue chain is DELLA protein SLN1 (618 aa).

Residues 1-36 (MKREYQDGGGSGGGGDEMGSSRDKMMVSSSEAGEGE) form a disordered region. Residues 7-17 (DGGGSGGGGDE) show a composition bias toward gly residues. The short motif at 39-43 (DELLA) is the DELLA motif element. Disordered stretches follow at residues 106–137 (LNAPPPPLPPAPPQLNASTSSTVTGGGGYFDL) and 159–197 (APADLSADSVRDPKRMRTGGSSTSSSSSSSSSLGGGAAR). The span at 108–118 (APPPPLPPAPP) shows a compositional bias: pro residues. Composition is skewed to low complexity over residues 119–128 (QLNASTSSTV) and 176–197 (TGGSSTSSSSSSSSSLGGGAAR). Residues 221–614 (VDTQEAGIRL…RPLIATSAWR (394 aa)) form the GRAS domain. The segment at 228–284 (IRLVHALLACAEAVQQENLSAAEALVKQIPLLAASQGGAMRKVAAYFGEALARRVFR) is leucine repeat I (LRI). The LxCxE motif motif lies at 235–239 (LACAE). Positions 303-368 (HAHFYESCPY…GGPPSFRLTG (66 aa)) are VHIID. Positions 334–338 (VHVVD) match the VHIID motif. The leucine repeat II (LRII) stretch occupies residues 382 to 421 (QVGWKLAQFAHTIRVDFQYRGLVAATLADLEPFMLQPEGE). Residues 431 to 535 (IAVNSVFEMH…EVYLGRQICN (105 aa)) form a PFYRE region. The tract at residues 538-614 (ACEGTERTER…RPLIATSAWR (77 aa)) is SAW.

The protein belongs to the GRAS family. DELLA subfamily. Phosphorylated. In terms of processing, ubiquitinated. Upon GA application it is ubiquitinated, leading to its subsequent degradation. As to expression, apparently restricted to regions where growth is occurring in the leaf blade. Localizes almost exclusively to the basal elongation zone (EZ) for the elongating blades of L1, L2 and L3. More detailed fractionation of the L3 blade shows that in cv. Himalaya, it is preferentially localized to the basal third of the EZ, but its presence can still be detected toward the end of the EZ (at protein level).

It localises to the nucleus. Probable transcriptional regulator that acts as a repressor of the gibberellin (GA) signaling pathway. Probably acts by participating in large multiprotein complexes that repress transcription of GA-inducible genes. Upon GA application, it is degraded by the proteasome, allowing the GA signaling pathway. Acts as a negative regulator of GAMYB gene expression. In Hordeum vulgare (Barley), this protein is DELLA protein SLN1 (SLN1).